The sequence spans 131 residues: Small ribosomal subunit protein uS11 (131 aa).

The protein belongs to the universal ribosomal protein uS11 family. Part of the 30S ribosomal subunit. Interacts with proteins S7 and S18. Binds to IF-3.

Functionally, located on the platform of the 30S subunit, it bridges several disparate RNA helices of the 16S rRNA. Forms part of the Shine-Dalgarno cleft in the 70S ribosome. This is Small ribosomal subunit protein uS11 from Bacillus pumilus (strain SAFR-032).